The sequence spans 430 residues: Lipoyl synthase, mitochondrial (430 aa).

The transit peptide at 1 to 37 (MAASTGKLRTLFSAHSSLSARPSSALPALRLTILRSY) directs the protein to the mitochondrion. Low complexity predominate over residues 40-56 (TTPPDSSISNPSNPSTT). Positions 40–64 (TTPPDSSISNPSNPSTTVKRPPTAF) are disordered. Residues cysteine 141, cysteine 146, cysteine 152, cysteine 172, cysteine 176, cysteine 179, and serine 387 each coordinate [4Fe-4S] cluster. One can recognise a Radical SAM core domain in the interval 155 to 376 (GSSKSAATAT…KERALEMGFL (222 aa)).

The protein belongs to the radical SAM superfamily. Lipoyl synthase family. [4Fe-4S] cluster serves as cofactor.

It localises to the mitochondrion. It carries out the reaction [[Fe-S] cluster scaffold protein carrying a second [4Fe-4S](2+) cluster] + N(6)-octanoyl-L-lysyl-[protein] + 2 oxidized [2Fe-2S]-[ferredoxin] + 2 S-adenosyl-L-methionine + 4 H(+) = [[Fe-S] cluster scaffold protein] + N(6)-[(R)-dihydrolipoyl]-L-lysyl-[protein] + 4 Fe(3+) + 2 hydrogen sulfide + 2 5'-deoxyadenosine + 2 L-methionine + 2 reduced [2Fe-2S]-[ferredoxin]. The protein operates within protein modification; protein lipoylation via endogenous pathway; protein N(6)-(lipoyl)lysine from octanoyl-[acyl-carrier-protein]: step 2/2. Its function is as follows. Catalyzes the radical-mediated insertion of two sulfur atoms into the C-6 and C-8 positions of the octanoyl moiety bound to the lipoyl domains of lipoate-dependent enzymes, thereby converting the octanoylated domains into lipoylated derivatives. The protein is Lipoyl synthase, mitochondrial of Blastomyces gilchristii (strain SLH14081) (Blastomyces dermatitidis).